Here is a 292-residue protein sequence, read N- to C-terminus: Mycothiol acetyltransferase (292 aa).

N-acetyltransferase domains are found at residues 13–168 and 159–292; these read ALDR…KWLQ and KSVA…VYEK. E40 contributes to the 1D-myo-inositol 2-(L-cysteinylamino)-2-deoxy-alpha-D-glucopyranoside binding site. 77–79 lines the acetyl-CoA pocket; it reads LAV. Residues E179, K218, and E226 each contribute to the 1D-myo-inositol 2-(L-cysteinylamino)-2-deoxy-alpha-D-glucopyranoside site. Residues 230-232 and 237-243 contribute to the acetyl-CoA site; these read VGL and RGRGLGD. Y264 lines the 1D-myo-inositol 2-(L-cysteinylamino)-2-deoxy-alpha-D-glucopyranoside pocket.

It belongs to the acetyltransferase family. MshD subfamily. In terms of assembly, monomer.

It carries out the reaction 1D-myo-inositol 2-(L-cysteinylamino)-2-deoxy-alpha-D-glucopyranoside + acetyl-CoA = mycothiol + CoA + H(+). Its function is as follows. Catalyzes the transfer of acetyl from acetyl-CoA to desacetylmycothiol (Cys-GlcN-Ins) to form mycothiol. This is Mycothiol acetyltransferase from Corynebacterium glutamicum (strain R).